Here is a 213-residue protein sequence, read N- to C-terminus: Orotate phosphoribosyltransferase (213 aa).

Lys-26 is a 5-phospho-alpha-D-ribose 1-diphosphate binding site. 34–35 (FF) is an orotate binding site. Residues 72-73 (YK), Arg-99, Lys-100, Lys-103, His-105, and 124-132 (DDVITAGTA) contribute to the 5-phospho-alpha-D-ribose 1-diphosphate site. Orotate contacts are provided by Thr-128 and Arg-156.

Belongs to the purine/pyrimidine phosphoribosyltransferase family. PyrE subfamily. As to quaternary structure, homodimer. The cofactor is Mg(2+).

The enzyme catalyses orotidine 5'-phosphate + diphosphate = orotate + 5-phospho-alpha-D-ribose 1-diphosphate. It participates in pyrimidine metabolism; UMP biosynthesis via de novo pathway; UMP from orotate: step 1/2. Its function is as follows. Catalyzes the transfer of a ribosyl phosphate group from 5-phosphoribose 1-diphosphate to orotate, leading to the formation of orotidine monophosphate (OMP). The sequence is that of Orotate phosphoribosyltransferase from Shigella flexneri.